Reading from the N-terminus, the 458-residue chain is MQIYLFNTLTQNKELFEPEDQTNVKMYVCGPTVYDNPHIGNSRSVVVYDLLYRILVDIFEAKSVKYVRNITDVDDKIIERAANLGISINELTDKVTKEFHTNMKYLFCLPPTIEPKATQHIDVMIEIIEKLIKSGHAYIADDHVYFDVLLAPNYTELSNRKLEDMFESVRVENSKTKKHPQDFVLWKPAKPDEDVHMNFKSPWGLGRPGWHIECSAMSYKYLGKNFDIHGGGADLIFPHHTNEIAQSKCAFSNSTYAKYWVHNGFLTVNGEKMSKSLGNFITVRDLMDKQIKGEIVRLFLLTAHYRRPLDYNDKAIEDAKKTLDYWYRAIQNINIQKIDTLPSDFMQSLFDDMNSPLAIKIINDYAKAIFTATNEEEKQFNASNLIACANFIGLMNETPHEWFNKDVDENYINNLINERLEAKKQKNWGLADQIRNKLLNEKIILEDKPNGTTIWRKE.

Cysteine 29 serves as a coordination point for Zn(2+). Positions 31-41 (PTVYDNPHIGN) match the 'HIGH' region motif. Zn(2+) is bound by residues cysteine 214, histidine 239, and glutamate 243. Positions 272-276 (KMSKS) match the 'KMSKS' region motif. An ATP-binding site is contributed by lysine 275.

It belongs to the class-I aminoacyl-tRNA synthetase family. As to quaternary structure, monomer. The cofactor is Zn(2+).

The protein localises to the cytoplasm. The catalysed reaction is tRNA(Cys) + L-cysteine + ATP = L-cysteinyl-tRNA(Cys) + AMP + diphosphate. This is Cysteine--tRNA ligase from Rickettsia bellii (strain OSU 85-389).